The following is a 97-amino-acid chain: Aspartyl/glutamyl-tRNA(Asn/Gln) amidotransferase subunit C (97 aa).

It belongs to the GatC family. In terms of assembly, heterotrimer of A, B and C subunits.

The enzyme catalyses L-glutamyl-tRNA(Gln) + L-glutamine + ATP + H2O = L-glutaminyl-tRNA(Gln) + L-glutamate + ADP + phosphate + H(+). It carries out the reaction L-aspartyl-tRNA(Asn) + L-glutamine + ATP + H2O = L-asparaginyl-tRNA(Asn) + L-glutamate + ADP + phosphate + 2 H(+). Functionally, allows the formation of correctly charged Asn-tRNA(Asn) or Gln-tRNA(Gln) through the transamidation of misacylated Asp-tRNA(Asn) or Glu-tRNA(Gln) in organisms which lack either or both of asparaginyl-tRNA or glutaminyl-tRNA synthetases. The reaction takes place in the presence of glutamine and ATP through an activated phospho-Asp-tRNA(Asn) or phospho-Glu-tRNA(Gln). This is Aspartyl/glutamyl-tRNA(Asn/Gln) amidotransferase subunit C from Prochlorococcus marinus subsp. pastoris (strain CCMP1986 / NIES-2087 / MED4).